The primary structure comprises 641 residues: FACT complex subunit SSRP1-A (641 aa).

Residues 459-561 (TDDDAVDPHL…DPNAPKRAMT (103 aa)) are disordered. Residues 476 to 487 (GDEESDEEDEDF) show a composition bias toward acidic residues. Positions 512–524 (GGEKEKLSKKEAS) are enriched in basic and acidic residues. A DNA-binding region (HMG box) is located at residues 556–624 (PKRAMTPFMY…RYEKESAVYR (69 aa)).

This sequence belongs to the SSRP1 family. As to quaternary structure, component of the FACT complex, a stable heterodimer of SPT16 and SSRP1.

It is found in the nucleus. The protein localises to the chromosome. Its function is as follows. Component of the FACT complex, a general chromatin factor that acts to reorganize nucleosomes. The FACT complex is involved in multiple processes that require DNA as a template such as mRNA elongation, DNA replication and DNA repair. During transcription elongation the FACT complex acts as a histone chaperone that both destabilizes and restores nucleosomal structure. It facilitates the passage of RNA polymerase II and transcription by promoting the dissociation of one histone H2A-H2B dimer from the nucleosome, then subsequently promotes the reestablishment of the nucleosome following the passage of RNA polymerase II. Binds specifically to double-stranded DNA. The chain is FACT complex subunit SSRP1-A (SSRP1-A) from Oryza sativa subsp. japonica (Rice).